Consider the following 473-residue polypeptide: Bifunctional protein HldE (473 aa).

Positions 1–317 (MTHGLPHFTS…LQQALHPRAI (317 aa)) are ribokinase. 195-198 (NLAE) contributes to the ATP binding site. Asp-264 is a catalytic residue. Positions 343–473 (MTNGCFDILH…SQIIDIIRKN (131 aa)) are cytidylyltransferase.

This sequence in the N-terminal section; belongs to the carbohydrate kinase PfkB family. The protein in the C-terminal section; belongs to the cytidylyltransferase family. As to quaternary structure, homodimer.

The catalysed reaction is D-glycero-beta-D-manno-heptose 7-phosphate + ATP = D-glycero-beta-D-manno-heptose 1,7-bisphosphate + ADP + H(+). It catalyses the reaction D-glycero-beta-D-manno-heptose 1-phosphate + ATP + H(+) = ADP-D-glycero-beta-D-manno-heptose + diphosphate. It functions in the pathway nucleotide-sugar biosynthesis; ADP-L-glycero-beta-D-manno-heptose biosynthesis; ADP-L-glycero-beta-D-manno-heptose from D-glycero-beta-D-manno-heptose 7-phosphate: step 1/4. Its pathway is nucleotide-sugar biosynthesis; ADP-L-glycero-beta-D-manno-heptose biosynthesis; ADP-L-glycero-beta-D-manno-heptose from D-glycero-beta-D-manno-heptose 7-phosphate: step 3/4. In terms of biological role, catalyzes the phosphorylation of D-glycero-D-manno-heptose 7-phosphate at the C-1 position to selectively form D-glycero-beta-D-manno-heptose-1,7-bisphosphate. Its function is as follows. Catalyzes the ADP transfer from ATP to D-glycero-beta-D-manno-heptose 1-phosphate, yielding ADP-D-glycero-beta-D-manno-heptose. The chain is Bifunctional protein HldE from Nitrosococcus oceani (strain ATCC 19707 / BCRC 17464 / JCM 30415 / NCIMB 11848 / C-107).